We begin with the raw amino-acid sequence, 299 residues long: MANRGEPDPKKSTESICSLTKPQLYSLYDDDVVRSEDNEIYEELKRSVSIDSTKYSRDQTIDSTFYLAHKVGGSLPRNTVSSNNLERILSASSIHENFPSRTRQTRQNILHYLQAVLILSLSGFAYHELSRNLHDNHLLHPDFASRPLLLGVKLCNWLSNGVLPNWLGYGVEGLLFGSVVPILDNIFQTEVVKSSVHHDSLTSVIRSINAMLGVTFGIRKIQWNSSLQAAGAWGLLNIILWLFFDGSISMLMSCICIGVGCCISCYKDIIDGSQFLYFMDFYFLGSLMFGKLGRYLYSH.

At 1–108 (MANRGEPDPK…PSRTRQTRQN (108 aa)) the chain is on the cytoplasmic side. The residue at position 90 (S90) is a Phosphoserine. The helical transmembrane segment at 109-129 (ILHYLQAVLILSLSGFAYHEL) threads the bilayer. Over 130–161 (SRNLHDNHLLHPDFASRPLLLGVKLCNWLSNG) the chain is Lumenal. A helical transmembrane segment spans residues 162–182 (VLPNWLGYGVEGLLFGSVVPI). The Cytoplasmic portion of the chain corresponds to 183-237 (LDNIFQTEVVKSSVHHDSLTSVIRSINAMLGVTFGIRKIQWNSSLQAAGAWGLLN). A helical transmembrane segment spans residues 238–258 (IILWLFFDGSISMLMSCICIG). Topologically, residues 259 to 268 (VGCCISCYKD) are lumenal. A helical transmembrane segment spans residues 269–289 (IIDGSQFLYFMDFYFLGSLMF). Topologically, residues 290-299 (GKLGRYLYSH) are cytoplasmic.

The protein belongs to the INSIG family.

The protein resides in the endoplasmic reticulum membrane. Stabilizes the HMG-CoA reductase HMG2 by preventing its HRD1-dependent degradation. Binds directly to the sterol-sensing domain (SSD)-containing transmembrane region of HMG2, promoting its folding to protect it from degradation. The polypeptide is Protein NSG2 (NSG2) (Saccharomyces cerevisiae (strain ATCC 204508 / S288c) (Baker's yeast)).